Reading from the N-terminus, the 339-residue chain is Inositol 2-dehydrogenase (339 aa).

Belongs to the Gfo/Idh/MocA family. As to quaternary structure, homotetramer.

The enzyme catalyses myo-inositol + NAD(+) = scyllo-inosose + NADH + H(+). In terms of biological role, involved in the oxidation of myo-inositol (MI) to 2-keto-myo-inositol (2KMI or 2-inosose). The polypeptide is Inositol 2-dehydrogenase (Leifsonia xyli subsp. xyli (strain CTCB07)).